The chain runs to 259 residues: Zinc import ATP-binding protein ZnuC (259 aa).

One can recognise an ABC transporter domain in the interval 22-238; that stretch reads VEARGLTVRR…PEYRALFGAH (217 aa). Position 54–61 (54–61) interacts with ATP; sequence GPNGSGKS.

It belongs to the ABC transporter superfamily. Zinc importer (TC 3.A.1.15.5) family. As to quaternary structure, the complex is composed of two ATP-binding proteins (ZnuC), two transmembrane proteins (ZnuB) and a solute-binding protein (ZnuA).

It localises to the cell inner membrane. It carries out the reaction Zn(2+)(out) + ATP(in) + H2O(in) = Zn(2+)(in) + ADP(in) + phosphate(in) + H(+)(in). Its function is as follows. Part of the ABC transporter complex ZnuABC involved in zinc import. Responsible for energy coupling to the transport system. This Alkalilimnicola ehrlichii (strain ATCC BAA-1101 / DSM 17681 / MLHE-1) protein is Zinc import ATP-binding protein ZnuC.